The primary structure comprises 231 residues: Large ribosomal subunit protein uL1 (231 aa).

The protein belongs to the universal ribosomal protein uL1 family. Part of the 50S ribosomal subunit.

In terms of biological role, binds directly to 23S rRNA. The L1 stalk is quite mobile in the ribosome, and is involved in E site tRNA release. Functionally, protein L1 is also a translational repressor protein, it controls the translation of the L11 operon by binding to its mRNA. The chain is Large ribosomal subunit protein uL1 from Desulforudis audaxviator (strain MP104C).